Here is a 310-residue protein sequence, read N- to C-terminus: MAAKNSSVTEFILEGLTHQPGLRIPLFFLFLGFYTVTVVGNLGLITLIGLNSHLHTPMYFFLFNLSLIDFCFSTTITPKMLMSFVSRKNIISFTGCMTQLFFFCFFVVSESFILSAMAYDRYVAICNPLLYTVTMSCQVCLLLLLGAYGMGFAGAMAHTGSIMNLTFCADNLVNHFMCDILPLLELSCNSSYMNELVVFIVVAVDVGMPIVTVFISYALILSSILHNSSTEGRSKAFSTCSSHIIVVSLFFGSGAFMYLKPLSILPLEQGKVSSLFYTIIVPVLNPLIYSLRNKDVKVALRRTLGRKIFS.

The Extracellular segment spans residues Met-1–Ile-24. Residue Asn-5 is glycosylated (N-linked (GlcNAc...) asparagine). The helical transmembrane segment at Pro-25–Ile-45 threads the bilayer. The Cytoplasmic portion of the chain corresponds to Thr-46–His-53. The chain crosses the membrane as a helical span at residues Leu-54–Thr-74. Over Thr-75–Thr-98 the chain is Extracellular. Cysteines 96 and 188 form a disulfide. A helical membrane pass occupies residues Gln-99–Tyr-119. The Cytoplasmic segment spans residues Asp-120–Gln-138. A helical membrane pass occupies residues Val-139 to Thr-159. Residues Gly-160–Leu-196 lie on the Extracellular side of the membrane. Residues Asn-164 and Asn-189 are each glycosylated (N-linked (GlcNAc...) asparagine). Residues Val-197–Ser-216 form a helical membrane-spanning segment. The Cytoplasmic portion of the chain corresponds to Tyr-217–Ala-236. The chain crosses the membrane as a helical span at residues Phe-237–Met-257. The Extracellular segment spans residues Tyr-258 to Gly-270. Residues Lys-271 to Leu-291 form a helical membrane-spanning segment. The Cytoplasmic segment spans residues Arg-292 to Ser-310.

Belongs to the G-protein coupled receptor 1 family.

It is found in the cell membrane. Its function is as follows. Odorant receptor. This chain is Olfactory receptor 8B12 (OR8B12), found in Homo sapiens (Human).